The sequence spans 718 residues: Catalase-peroxidase (718 aa).

The tryptophyl-tyrosyl-methioninium (Trp-Tyr) (with M-246) cross-link spans 92–220 (WHAAGTYRTA…LASVMMGLIY (129 aa)). The active-site Proton acceptor is the H93. A cross-link (tryptophyl-tyrosyl-methioninium (Tyr-Met) (with W-92)) is located at residues 220–246 (YVNPEGVDGHPDPLKTANDVRVTFERM). Position 261 (H261) interacts with heme b.

The protein belongs to the peroxidase family. Peroxidase/catalase subfamily. As to quaternary structure, homodimer or homotetramer. Heme b serves as cofactor. In terms of processing, formation of the three residue Trp-Tyr-Met cross-link is important for the catalase, but not the peroxidase activity of the enzyme.

The enzyme catalyses H2O2 + AH2 = A + 2 H2O. It carries out the reaction 2 H2O2 = O2 + 2 H2O. Its function is as follows. Bifunctional enzyme with both catalase and broad-spectrum peroxidase activity. The protein is Catalase-peroxidase of Shewanella halifaxensis (strain HAW-EB4).